Here is a 101-residue protein sequence, read N- to C-terminus: Replication restart protein PriB (101 aa).

The 101-residue stretch at 1–101 folds into the SSB domain; that stretch reads MTTNNLVLSG…IHAENVELKT (101 aa).

Belongs to the PriB family. In terms of assembly, homodimer. Interacts with PriA and DnaT. Component of the replication restart primosome. Primosome assembly occurs via a 'hand-off' mechanism. PriA binds to replication forks, subsequently PriB then DnaT bind; DnaT then displaces ssDNA to generate the helicase loading substrate.

Its function is as follows. Involved in the restart of stalled replication forks, which reloads the replicative helicase on sites other than the origin of replication; the PriA-PriB pathway is the major replication restart pathway. During primosome assembly it facilitates complex formation between PriA and DnaT on DNA; stabilizes PriA on DNA. Stimulates the DNA unwinding activity of PriA helicase. This chain is Replication restart protein PriB, found in Shewanella oneidensis (strain ATCC 700550 / JCM 31522 / CIP 106686 / LMG 19005 / NCIMB 14063 / MR-1).